Consider the following 595-residue polypeptide: Polyadenylate-binding protein-interacting protein 4 (595 aa).

The Sm domain maps to 48 to 113; sequence RLVYFTTCKI…SRSEFVRKPP (66 aa). 2 stretches are compositionally biased toward polar residues: residues 302 to 313 and 326 to 346; these read GGSSTSDGQKPA and GDSQSSRKNKNVDQSCSTSKQ. 2 disordered regions span residues 302–505 and 536–595; these read GGSS…FYYP and MYHP…KGRE. Over residues 364–382 the composition is skewed to basic and acidic residues; the sequence is DEQRRKNNEEVSHNNRSAE. The segment covering 416–465 has biased composition (low complexity); sequence SQVSSKTKSESSFGQSASRSSESRPGPSTSSRPGLSPSSSIGSMASSEKS. The short motif at 466-474 is the PAM2-like 1; degenerate element; that stretch reads TLNPNAKEF. A PAM2-like 2 motif is present at residues 475–485; it reads KLNPKAKSFKP. Composition is skewed to low complexity over residues 488-501 and 548-570; these read SAAAPPQSPIADAS and QPQYPQQQMIPGQQQQQMIPGQQ.

In terms of tissue distribution, expressed in cauline leaves, stems, rosette leaves, immature siliques and primary inflorescences.

The polypeptide is Polyadenylate-binding protein-interacting protein 4 (CID4) (Arabidopsis thaliana (Mouse-ear cress)).